The following is a 1211-amino-acid chain: Periplasmic acid trehalase ATC1 (1211 aa).

The Cytoplasmic segment spans residues 1 to 46; sequence MKRIRSLWFNAEASYSNLNNSPSLRNKNSTGNNSRSKNYRSFSRFD. A helical transmembrane segment spans residues 47–67; it reads LINSILLLMMLFLLAIFVTAL. Topologically, residues 68 to 1211 are periplasmic; sequence YLTKSSRLTY…ATIKEIVLND (1144 aa). The segment at 70 to 131 is required for cell surface targeting; the sequence is TKSSRLTYSH…NTAYYDDENM (62 aa). 10 N-linked (GlcNAc...) asparagine glycosylation sites follow: Asn98, Asn207, Asn238, Asn247, Asn255, Asn259, Asn325, Asn370, Asn376, and Asn488. Substrate is bound at residue 513–514; it reads WD. 4 N-linked (GlcNAc...) asparagine glycosylation sites follow: Asn539, Asn568, Asn628, and Asn638. Glu644 serves as the catalytic Proton donor. 2 N-linked (GlcNAc...) asparagine glycosylation sites follow: Asn696 and Asn705. Position 711 to 712 (711 to 712) interacts with substrate; the sequence is KQ. 10 N-linked (GlcNAc...) asparagine glycosylation sites follow: Asn879, Asn897, Asn910, Asn972, Asn990, Asn1031, Asn1049, Asn1064, Asn1147, and Asn1157.

It belongs to the glycosyl hydrolase 65 family. Glycosylated.

It localises to the membrane. Its subcellular location is the vacuole lumen. The protein localises to the periplasm. It carries out the reaction alpha,alpha-trehalose + H2O = alpha-D-glucose + beta-D-glucose. Functionally, periplasmic acid trehalase that catalyzes hydrolysis of the disaccharide trehalose and required for growth on trehalose as carbon source. Growth on trehalose is strictly respiratory. The sequence is that of Periplasmic acid trehalase ATC1 from Saccharomyces cerevisiae (strain CEN.PK113-7D) (Baker's yeast).